A 595-amino-acid chain; its full sequence is Putative terpenoid synthase 16 (595 aa).

Positions 349, 353, 494, and 502 each coordinate Mg(2+). The DDXXD motif motif lies at 349 to 353 (DDTCD).

This sequence belongs to the terpene synthase family. Tpsa subfamily. It depends on Mg(2+) as a cofactor. The cofactor is Mn(2+).

Its subcellular location is the cytoplasm. Its pathway is secondary metabolite biosynthesis; terpenoid biosynthesis. The sequence is that of Putative terpenoid synthase 16 (TPS16) from Arabidopsis thaliana (Mouse-ear cress).